Consider the following 247-residue polypeptide: MTHYKVTLAYDGTNFAGYQVQPKQRTVQGVLQKALTKMTKGQPVHVDGSGRTDSGVHALGQVISFDYPGNIPAESMLKAMNSLMPLDIEILKAEIVDADFHARYSAKGKRYLYRVARGYYTNPFNRLYTGHYPYKLDVQRIEVALKDLVGTHDFTSFAASGGVIVDKVRTIYEATVREDPVTNEIIFEFYGNGFLYNMVRILVATALEIGNGRRDVHDFQRLFAVKDRQQARGTAPASGLYLKEVYY.

D53 (nucleophile) is an active-site residue. A substrate-binding site is contributed by Y111.

Belongs to the tRNA pseudouridine synthase TruA family. Homodimer.

It catalyses the reaction uridine(38/39/40) in tRNA = pseudouridine(38/39/40) in tRNA. Formation of pseudouridine at positions 38, 39 and 40 in the anticodon stem and loop of transfer RNAs. This chain is tRNA pseudouridine synthase A, found in Lacticaseibacillus casei (strain BL23) (Lactobacillus casei).